Consider the following 370-residue polypeptide: MEWPINKPIYDINKSWEDNLENGPFIEGYKKVDRNDNKDPSKYIDFLGQKLASPIGVPAGPLLNSQWVKFALEAGFDLPTYKTIRSHEHFGHPVPNVMYLDLESEDKQFTKSDSGSTLHATQTIPTTMDQLAITNSFGMPSMGKEYLYKDIALAHSYLGSGQSMIVSITGTASSAHDFLQDFVDTVRIACDAGAKMVEVNYSCPNVVTGEGQIYHNPDAVYEISSTLVKELSSKNIPLIIKVGVMDDLEKMERLFQQAERAGVAAIAGINTLSMKVTDKITGEPSLGASRLTSGVCGAPIRSAALDWVSTASSIIKKQNSKLKLLGCGGIVKPEHFDDFLNSGADIAMSATGLMWDPYIAMKWHNNNKNN.

Substrate contacts are provided by residues Lys-82, 135-139, and Asn-200; that span reads NSFGM. Residue 82 to 83 coordinates FMN; sequence KT. Position 200 (Asn-200) interacts with FMN. Cys-203 functions as the Nucleophile in the catalytic mechanism. The FMN site is built by Lys-241 and Ile-269. A substrate-binding site is contributed by 270 to 271; that stretch reads NT. FMN is bound by residues Gly-297, 328 to 329, and 350 to 351; these read GG and AT.

Belongs to the dihydroorotate dehydrogenase family. FMN is required as a cofactor.

The enzyme catalyses (S)-dihydroorotate + A = orotate + AH2. The protein operates within pyrimidine metabolism; UMP biosynthesis via de novo pathway. Its function is as follows. Catalyzes the conversion of dihydroorotate to orotate. Participates in the pyrimidine biosynthetic pathway. The sequence is that of Dihydroorotate dehydrogenase (pyr4) from Dictyostelium discoideum (Social amoeba).